The chain runs to 154 residues: Putative pre-16S rRNA nuclease (154 aa).

It belongs to the YqgF nuclease family.

Its subcellular location is the cytoplasm. Its function is as follows. Could be a nuclease involved in processing of the 5'-end of pre-16S rRNA. This Rickettsia akari (strain Hartford) protein is Putative pre-16S rRNA nuclease.